We begin with the raw amino-acid sequence, 273 residues long: 4-hydroxy-tetrahydrodipicolinate reductase (273 aa).

Residue 12–17 (GAAGRM) coordinates NAD(+). Residue Arg-39 coordinates NADP(+). NAD(+)-binding positions include 102-104 (GTT) and 126-129 (AANF). His-159 functions as the Proton donor/acceptor in the catalytic mechanism. His-160 lines the (S)-2,3,4,5-tetrahydrodipicolinate pocket. Residue Lys-163 is the Proton donor of the active site. 169 to 170 (GT) contributes to the (S)-2,3,4,5-tetrahydrodipicolinate binding site.

It belongs to the DapB family. In terms of assembly, homotetramer.

Its subcellular location is the cytoplasm. The catalysed reaction is (S)-2,3,4,5-tetrahydrodipicolinate + NAD(+) + H2O = (2S,4S)-4-hydroxy-2,3,4,5-tetrahydrodipicolinate + NADH + H(+). The enzyme catalyses (S)-2,3,4,5-tetrahydrodipicolinate + NADP(+) + H2O = (2S,4S)-4-hydroxy-2,3,4,5-tetrahydrodipicolinate + NADPH + H(+). It functions in the pathway amino-acid biosynthesis; L-lysine biosynthesis via DAP pathway; (S)-tetrahydrodipicolinate from L-aspartate: step 4/4. Functionally, catalyzes the conversion of 4-hydroxy-tetrahydrodipicolinate (HTPA) to tetrahydrodipicolinate. This Erwinia tasmaniensis (strain DSM 17950 / CFBP 7177 / CIP 109463 / NCPPB 4357 / Et1/99) protein is 4-hydroxy-tetrahydrodipicolinate reductase.